Consider the following 388-residue polypeptide: Putative C-&gt;U-editing enzyme APOBEC-4 (388 aa).

Positions 60–176 (PQTKHLTFYE…AWNREALRGL (117 aa)) constitute a CMP/dCMP-type deaminase domain. A Zn(2+)-binding site is contributed by histidine 92. Glutamate 94 acts as the Proton donor in catalysis. Zn(2+)-binding residues include cysteine 126 and cysteine 133. The segment at 322-356 (KVKALRKSPSGRPVKKEEARKGSTRSQEANETNKS) is disordered.

Belongs to the cytidine and deoxycytidylate deaminase family. Zn(2+) serves as cofactor.

Its function is as follows. Putative C to U editing enzyme whose physiological substrate is not yet known. This Rattus norvegicus (Rat) protein is Putative C-&gt;U-editing enzyme APOBEC-4 (Apobec4).